Consider the following 273-residue polypeptide: Putative pyruvate, phosphate dikinase regulatory protein (273 aa).

153–160 (GVSRTSKS) contacts ADP.

Belongs to the pyruvate, phosphate/water dikinase regulatory protein family. PDRP subfamily.

The catalysed reaction is N(tele)-phospho-L-histidyl/L-threonyl-[pyruvate, phosphate dikinase] + ADP = N(tele)-phospho-L-histidyl/O-phospho-L-threonyl-[pyruvate, phosphate dikinase] + AMP + H(+). It catalyses the reaction N(tele)-phospho-L-histidyl/O-phospho-L-threonyl-[pyruvate, phosphate dikinase] + phosphate + H(+) = N(tele)-phospho-L-histidyl/L-threonyl-[pyruvate, phosphate dikinase] + diphosphate. Its function is as follows. Bifunctional serine/threonine kinase and phosphorylase involved in the regulation of the pyruvate, phosphate dikinase (PPDK) by catalyzing its phosphorylation/dephosphorylation. This chain is Putative pyruvate, phosphate dikinase regulatory protein, found in Ehrlichia ruminantium (strain Welgevonden).